Consider the following 98-residue polypeptide: Cystatin-B (98 aa).

Met1 is subject to N-acetylmethionine. The short motif at 46 to 50 is the Secondary area of contact element; sequence QLVAG.

This sequence belongs to the cystatin family. As to quaternary structure, able to form dimers stabilized by noncovalent forces.

The protein resides in the cytoplasm. In terms of biological role, this is an intracellular thiol proteinase inhibitor. The chain is Cystatin-B (CSTB) from Bos taurus (Bovine).